Consider the following 317-residue polypeptide: Ret finger protein-like 3 (317 aa).

The segment at 40–82 adopts an RING-type zinc-finger fold; sequence CPVCSDYLEKPMSLECGCTVCLKCINSLQKEPHGEDLLCCCCS. A B30.2/SPRY domain is found at 107 to 301; that stretch reads EPKLKKILQM…DQGVLSICPL (195 aa).

Expressed during neurogenesis in differentiating human embryonic stem cells and in the developing human neocortex.

The protein localises to the cytoplasm. The protein resides in the nucleus. (Microbial infection) Stimulates the activity of Human Immunodeficiency Virus 1/HIV-1 pre-integration complex. The sequence is that of Ret finger protein-like 3 (RFPL3) from Homo sapiens (Human).